The primary structure comprises 551 residues: Glucans biosynthesis protein D (551 aa).

The tat-type signal signal peptide spans 1 to 32; sequence MDRRRFIKGSMAMAAVCGTSGIASLFSQAAFA.

It belongs to the OpgD/OpgG family. Predicted to be exported by the Tat system. The position of the signal peptide cleavage has not been experimentally proven.

The protein localises to the periplasm. It functions in the pathway glycan metabolism; osmoregulated periplasmic glucan (OPG) biosynthesis. Its function is as follows. Probably involved in the control of the structural glucose backbone of osmoregulated periplasmic glucans (OPGs). The polypeptide is Glucans biosynthesis protein D (Escherichia coli O1:K1 / APEC).